A 127-amino-acid chain; its full sequence is Ribonuclease VapC9 (127 aa).

The PINc domain occupies 2–115; it reads IVVDASAALA…VTADLRLSDT (114 aa). Mg(2+) contacts are provided by Asp5 and Asp91.

Belongs to the PINc/VapC protein family. The cofactor is Mg(2+).

Its function is as follows. Toxic component of a type II toxin-antitoxin (TA) system. An RNase. The cognate antitoxin is VapB9. This Mycobacterium tuberculosis (strain CDC 1551 / Oshkosh) protein is Ribonuclease VapC9.